The chain runs to 762 residues: uncharacterized protein (762 aa).

Residues 1–26 form a disordered region; that stretch reads MENLKSASPEEDSPRHGDNMGKPKRI. Residues 12 to 21 are compositionally biased toward basic and acidic residues; that stretch reads DSPRHGDNMG. The segment at residues 30–57 is a DNA-binding region (zn(2)-C6 fungal-type); the sequence is CDMCRKRKIRCDGKQPACSNCVSHGIPC. The segment at 647–668 is disordered; it reads QSHVPPRISSNHSDTSVKSNSP.

Its subcellular location is the nucleus. This is an uncharacterized protein from Schizosaccharomyces pombe (strain 972 / ATCC 24843) (Fission yeast).